Consider the following 318-residue polypeptide: Homoserine kinase (318 aa).

Residue 97–107 participates in ATP binding; the sequence is PIGSGLGSSAC.

Belongs to the GHMP kinase family. Homoserine kinase subfamily.

Its subcellular location is the cytoplasm. It carries out the reaction L-homoserine + ATP = O-phospho-L-homoserine + ADP + H(+). The protein operates within amino-acid biosynthesis; L-threonine biosynthesis; L-threonine from L-aspartate: step 4/5. In terms of biological role, catalyzes the ATP-dependent phosphorylation of L-homoserine to L-homoserine phosphate. This is Homoserine kinase from Aliivibrio salmonicida (strain LFI1238) (Vibrio salmonicida (strain LFI1238)).